Reading from the N-terminus, the 2731-residue chain is Teneurin-1 (2731 aa).

The interval 1–72 is disordered; sequence MEQTDCKPYQ…KRKDVEKSTQ (72 aa). The Teneurin N-terminal domain occupies 1 to 318; it reads MEQTDCKPYQ…KPYRCCNWKC (318 aa). The Cytoplasmic portion of the chain corresponds to 1-324; sequence MEQTDCKPYQ…NWKCTALSAT (324 aa). The span at 44–55 shows a compositional bias: basic and acidic residues; it reads ETLHEYNQELRR. Positions 62 to 65 match the Nuclear localization signal (NLS) motif; it reads RKRK. The residue at position 105 (Ser105) is a Phosphoserine. Position 109 is a phosphothreonine (Thr109). A Phosphoserine modification is found at Ser116. A disordered region spans residues 175 to 241; that stretch reads DSAQDMQSSP…PAPPTSTQDS (67 aa). Polar residues predominate over residues 178 to 189; the sequence is QDMQSSPHNQFT. Residues 192–201 show a composition bias toward pro residues; that stretch reads PLPPPPPPPH. A compositionally biased stretch (polar residues) spans 214–224; it reads DSLQRRSMTTR. A Required for interaction with SORBS1 (Ten-1 ICD form) motif is present at residues 290 to 297; the sequence is PPPRPLPR. A helical transmembrane segment spans residues 325–345; that stretch reads AITVTLALLLAYVIAVHLFGL. Over 346–2731 the chain is Extracellular; the sequence is TWQLQPVGQI…FMRQSEIGRR (2386 aa). Asn432 is a glycosylation site (N-linked (GlcNAc...) asparagine). EGF-like domains follow at residues 527 to 558, 559 to 590, 591 to 623, 624 to 656, 657 to 690, 691 to 720, 721 to 752, and 760 to 795; these read IMDDCSTNCNGNGECISGHCHCFPGFLGPDCA, RDSCPVLCGGNGEYEKGHCVCRNGWKGPECDV, PEEQCIDPTCFGHGTCIMGVCICVPGYKGEICE, EEDCLDPMCSSHGICVKGECHCSTGWGGVNCET, PLPICQEQCSGHGTFLLDTGVCSCDPKWTGSDCS, TELCTMECGSHGVCSRGICQCEEGWVGPTC, EERSCHSHCAEHGQCKDGKCECSPGWEGDHCT, and VRDGCPGLCFGNGRCTLDQNGWHCVCQVGWSGTGCN. 22 cysteine pairs are disulfide-bonded: Cys531–Cys541, Cys535–Cys546, Cys548–Cys557, Cys566–Cys577, Cys579–Cys588, Cys595–Cys606, Cys600–Cys611, Cys613–Cys622, Cys627–Cys638, Cys632–Cys643, Cys645–Cys654, Cys665–Cys678, Cys680–Cys689, Cys694–Cys704, Cys698–Cys709, Cys711–Cys720, Cys725–Cys735, Cys729–Cys740, Cys742–Cys751, Cys764–Cys774, Cys768–Cys783, and Cys785–Cys794. N-linked (GlcNAc...) asparagine glycosylation is found at Asn904 and Asn1083. NHL repeat units follow at residues 1193–1218, 1298–1342, 1357–1408, 1420–1464, and 1487–1530; these read LFAPVALASGPDGSVYVGDFNFVRRI, SHCG…NAVI, LSCD…IAGR, FLVS…VTTN, and CFSG…ISKN. Residues 1540–1559 form a YD 1 repeat; that stretch reads YEIASPADQELYQFTVNGTH. N-linked (GlcNAc...) asparagine glycosylation is found at Asn1556 and Asn1573. YD repeat units follow at residues 1576–1596, 1614–1638, 1639–1660, and 1661–1681; these read YNAEGDLGAITSSNGNSVHIR, YWLTISSNGVLKRVSAQGYNLALMT, YPGNTGLLATKSNENGWTTVYE, and YDPEGHLTNATFPTGEVSSFH. N-linked (GlcNAc...) asparagine glycans are attached at residues Asn1669, Asn1705, Asn1743, Asn1763, Asn1787, and Asn1848. YD repeat units lie at residues 1851–1870, 1871–1891, 1892–1910, 1911–1931, 1939–1955, 1956–1975, 1976–1995, 1998–2018, 2021–2041, 2091–2111, and 2119–2139; these read YSPSGLVTFIQRGTWNEKME, YDQSGKIISRTWADGKIWSYT, YLEKSVMLLLHSQRRYIFE, YDQSDCLLSVTMPSMVRHSLQ, YRNIYTPPDSSTSFIQD, YSRDGRLLQTLHLGTGRRVL, YKYTKQARLSEILYDTTQVT, YEESSGVIKTIHLMHDGFICT, YRQTGPLIGRQIFRFSEEGLV, YDLNQVITTTVMKHTKIFNAN, and YEILKAIAYWMTIQYDNMGRM. An N-linked (GlcNAc...) asparagine glycan is attached at Asn2151. YD repeat units follow at residues 2159 to 2179, 2180 to 2200, 2202 to 2222, 2234 to 2254, and 2256 to 2276; these read YDADGQLQTVSVNDKIQWRYS, YDLNGNINLLSHGNSARLTPL, YDLRDRITRLGEIQYKMDEDG, YNSNGLLQKAYNKVSGWTVQY, and YDGLGRRVASKSSLGQHLQFF. Asn2291 carries an N-linked (GlcNAc...) asparagine glycan. YD repeat units lie at residues 2302 to 2319 and 2320 to 2343; these read YDLQGHLIAMELSSGEEY and YVACDNMGTPLAVFSSRGQVIKEI. Phosphoserine is present on Ser2586. Asn2608 carries N-linked (GlcNAc...) asparagine glycosylation.

The protein belongs to the tenascin family. Teneurin subfamily. Homodimer; disulfide-linked. Heterodimer with either TENM2 or TENM3. May also form heterodimer with TENM4. Ten-1 ICD interacts with SORBS1 (via third SH3 domain). Interacts with MBD1 isoform 2. Ten-1 ICD interacts with HINT1. In terms of processing, once secreted, may also be cleaved to give rise to the TCAP-1 form. Post-translationally, derives from the plasma membrane form by proteolytic processing. Further proteolytic cleavage may generate 11.9 and 4.7 kDa bioactive peptides. In terms of tissue distribution, isoform 1 and isoform 2 are expressed in the brain. Isoform 2 is expressed in the granular layer of the dentate gyrus and the pyramidal layer (Py) of the CA1, CA2 and CA3 of the hippocampus (at protein level). Expressed in the cortex, thalamus, CA1, CA2, CA3, dentate gyrus and granular layer of the hippocampus. Weakly expressed in kidney, testis and lung.

The protein resides in the cell membrane. Its subcellular location is the cytoplasm. It is found in the secreted. The protein localises to the nucleus. It localises to the nucleus speckle. The protein resides in the nucleus matrix. Its subcellular location is the cytoskeleton. Involved in neural development, regulating the establishment of proper connectivity within the nervous system. May function as a cellular signal transducer. Its function is as follows. Plays a role in the regulation of neuroplasticity in the limbic system. Mediates a rapid reorganization of actin- and tubulin-based cytoskeleton elements with an increase in dendritic arborization and spine density formation of neurons in the hippocampus and amygdala. Induces BDNF transcription inhibition in neurons. Activates the mitogen-activated protein (MAP) kinase 2 (MEK2) and extracellular signal-regulated kinase (ERK) cascade. Also acts as a bioactive neuroprotective peptide on limbic neurons of the brain and regulates stress-induced behavior: attenuates alkalosis-associated necrotic cell death and the effects of corticotropin-releasing factor (CRF) on c-fos/FOS induction and on the reinstatement of cocaine seeking. In terms of biological role, induces gene transcription activation. The protein is Teneurin-1 (Tenm1) of Mus musculus (Mouse).